The chain runs to 151 residues: Ribosome maturation factor RimP (151 aa).

The protein belongs to the RimP family.

It localises to the cytoplasm. In terms of biological role, required for maturation of 30S ribosomal subunits. The protein is Ribosome maturation factor RimP of Thermoanaerobacter pseudethanolicus (strain ATCC 33223 / 39E) (Clostridium thermohydrosulfuricum).